The following is a 1070-amino-acid chain: 3',5'-cyclic-AMP phosphodiesterase (1070 aa).

Disordered stretches follow at residues 1–91 (MSQE…KQDS), 166–215 (STSI…TRFQ), 487–516 (VPAS…LSQG), and 615–653 (SAGQ…RLPT). Over residues 51-69 (KQVQVQSQKFSSTSSTTKV) the composition is skewed to low complexity. Polar residues predominate over residues 70 to 84 (ATHSFSMSSSAGTTG). Residues 166–210 (STSIITSSEQRTSTSTSSSSSTRYIASGSSNLAGGNSNSASSASS) show a composition bias toward low complexity. The segment covering 488–506 (PASNKSRRPNQSSSASRSG) has biased composition (polar residues). In terms of domain architecture, PDEase spans 656–985 (VETPRENELG…DYYQSMIPPS (330 aa)). His-732 functions as the Proton donor in the catalytic mechanism. 732-736 (HNSLH) provides a ligand contact to 3',5'-cyclic AMP. Positions 736, 772, 773, and 890 each coordinate a divalent metal cation. Residues Asp-773, Asp-890, and Gln-941 each contribute to the 3',5'-cyclic AMP site. A compositionally biased stretch (acidic residues) spans 1007-1024 (EESDQENLAELEEGDESG). The disordered stretch occupies residues 1007 to 1070 (EESDQENLAE…CQNQPQHGGM (64 aa)). Residues 1025–1042 (GESTTTGTTGTTAASALS) are compositionally biased toward low complexity. Positions 1043–1054 (GAGGGGGGGGGM) are enriched in gly residues. Residues 1060–1070 (GCQNQPQHGGM) show a composition bias toward polar residues.

The protein belongs to the cyclic nucleotide phosphodiesterase family. PDE4 subfamily. Monomer. A divalent metal cation serves as cofactor.

It carries out the reaction 3',5'-cyclic AMP + H2O = AMP + H(+). Its pathway is purine metabolism; 3',5'-cyclic AMP degradation; AMP from 3',5'-cyclic AMP: step 1/1. Hydrolyzes the second messenger cAMP, which is a key regulator of many important physiological processes. Vital for female fertility. Required for learning/memory. This Drosophila melanogaster (Fruit fly) protein is 3',5'-cyclic-AMP phosphodiesterase (dnc).